Here is a 370-residue protein sequence, read N- to C-terminus: 4-hydroxy-3-methylbut-2-en-1-yl diphosphate synthase (flavodoxin) (370 aa).

[4Fe-4S] cluster is bound by residues cysteine 270, cysteine 273, cysteine 305, and glutamate 312.

This sequence belongs to the IspG family. Requires [4Fe-4S] cluster as cofactor.

It carries out the reaction (2E)-4-hydroxy-3-methylbut-2-enyl diphosphate + oxidized [flavodoxin] + H2O + 2 H(+) = 2-C-methyl-D-erythritol 2,4-cyclic diphosphate + reduced [flavodoxin]. Its pathway is isoprenoid biosynthesis; isopentenyl diphosphate biosynthesis via DXP pathway; isopentenyl diphosphate from 1-deoxy-D-xylulose 5-phosphate: step 5/6. Its function is as follows. Converts 2C-methyl-D-erythritol 2,4-cyclodiphosphate (ME-2,4cPP) into 1-hydroxy-2-methyl-2-(E)-butenyl 4-diphosphate. This is 4-hydroxy-3-methylbut-2-en-1-yl diphosphate synthase (flavodoxin) from Hahella chejuensis (strain KCTC 2396).